The primary structure comprises 420 residues: RING finger protein 39 (420 aa).

The RING-type zinc-finger motif lies at 88–135 (CPLCGGSFEDPVLLACEHSFCRACLARRWGTPPATDTEASPTACPCCG). 2 disordered regions span residues 166–186 (PGARAGRRRGGRIPTMGCLDP) and 246–265 (DRRSVQLAPPGTPAPPDGPK). The region spanning 210 to 420 (DDLPEDYPVV…APLRIVPAES (211 aa)) is the B30.2/SPRY domain.

The protein localises to the cytoplasm. It catalyses the reaction S-ubiquitinyl-[E2 ubiquitin-conjugating enzyme]-L-cysteine + [acceptor protein]-L-lysine = [E2 ubiquitin-conjugating enzyme]-L-cysteine + N(6)-ubiquitinyl-[acceptor protein]-L-lysine.. The protein operates within protein modification; protein ubiquitination. In terms of biological role, plays an inhibitory role in anti-RNA viral innate immunity by targeting the adapter DDX3X and promoting its 'Lys-48'-linked polyubiquitination. Alternatively, enhances the cGAS-STING pathway activation by promoting 'Lys-63'-linked ubiquitination of STING1, facilitating the STING1-TBK1 complex formation and STING1 activation. The protein is RING finger protein 39 (RNF39) of Macaca mulatta (Rhesus macaque).